A 354-amino-acid chain; its full sequence is Probable mannitol dehydrogenase 1 (354 aa).

The Zn(2+) site is built by cysteine 43, histidine 65, cysteine 96, cysteine 99, cysteine 102, cysteine 110, and cysteine 158.

Belongs to the zinc-containing alcohol dehydrogenase family. The cofactor is Zn(2+).

It carries out the reaction D-mannitol + NAD(+) = D-mannose + NADH + H(+). Functionally, oxidizes mannitol to mannose. Provides the initial step by which translocated mannitol is committed to central metabolism and, by regulating mannitol pool size, is important in regulating salt tolerance at the cellular level. The chain is Probable mannitol dehydrogenase 1 (CAD1) from Stylosanthes humilis (Townsville stylo).